The sequence spans 482 residues: BTB/POZ domain-containing protein 6-B (482 aa).

The BTB domain occupies 80-150 (ADVHFVVGPP…MYSDEIELEA (71 aa)).

Interacts with cul3. Interacts (via BTB domain) with zbtb16/plzf. In embryos, expressed in the cranial ganglia.

It is found in the cytoplasm. It localises to the nucleus. Functionally, adapter protein for the cul3 E3 ubiquitin-protein ligase complex. Promotes the export of zbtb16/plzf from the nucleus to the cytoplasm and targets zbtb16/plzf for ubiquitination and degradation. Up-regulates neurog1 expression and antagonizes zbtb16/plzf, to promote neurogenesis. The sequence is that of BTB/POZ domain-containing protein 6-B (btbd6b) from Danio rerio (Zebrafish).